A 176-amino-acid polypeptide reads, in one-letter code: Sperm-egg fusion protein TMEM95 (176 aa).

The signal sequence occupies residues 1 to 16; sequence MWRLALGGVFLAAAQA. Intrachain disulfides connect Cys17–Cys118, Cys20–Cys121, Cys105–Cys128, and Cys109–Cys134. Residues 17–145 are Extracellular-facing; the sequence is CVFCRLPAHD…PGSQDLWEAK (129 aa). The helical transmembrane segment at 146-166 threads the bilayer; that stretch reads ILLLSIFGAFLLLGVLSLLVE. At 167-176 the chain is on the cytoplasmic side; it reads SHHLQAKSGL.

This sequence belongs to the TMEM95 family. As to quaternary structure, does not interact with sperm-egg fusion proteins IZUMO1 or IZUMO1R/JUNO. N-glycosylated. In terms of tissue distribution, spermatozoa (at protein level).

It localises to the cytoplasmic vesicle. The protein resides in the secretory vesicle. Its subcellular location is the acrosome membrane. Functionally, sperm protein required for fusion of sperm with the egg membrane during fertilization. The polypeptide is Sperm-egg fusion protein TMEM95 (Homo sapiens (Human)).